A 294-amino-acid chain; its full sequence is tRNA dimethylallyltransferase (294 aa).

Residue 10–17 coordinates ATP; that stretch reads GPTAVGKT. 12-17 provides a ligand contact to substrate; the sequence is TAVGKT. The segment at 35–38 is interaction with substrate tRNA; it reads DSQQ.

This sequence belongs to the IPP transferase family. As to quaternary structure, monomer. The cofactor is Mg(2+).

The catalysed reaction is adenosine(37) in tRNA + dimethylallyl diphosphate = N(6)-dimethylallyladenosine(37) in tRNA + diphosphate. Catalyzes the transfer of a dimethylallyl group onto the adenine at position 37 in tRNAs that read codons beginning with uridine, leading to the formation of N6-(dimethylallyl)adenosine (i(6)A). The chain is tRNA dimethylallyltransferase from Streptococcus mutans serotype c (strain ATCC 700610 / UA159).